Consider the following 443-residue polypeptide: Glutamyl-tRNA reductase (443 aa).

Residues 55–58 (TCNR), serine 113, 118–120 (EPQ), and glutamine 124 each bind substrate. The Nucleophile role is filled by cysteine 56. Residue 193–198 (GAGEMI) coordinates NADP(+).

Belongs to the glutamyl-tRNA reductase family. In terms of assembly, homodimer.

The enzyme catalyses (S)-4-amino-5-oxopentanoate + tRNA(Glu) + NADP(+) = L-glutamyl-tRNA(Glu) + NADPH + H(+). It participates in porphyrin-containing compound metabolism; protoporphyrin-IX biosynthesis; 5-aminolevulinate from L-glutamyl-tRNA(Glu): step 1/2. It functions in the pathway porphyrin-containing compound metabolism; chlorophyll biosynthesis. Catalyzes the NADPH-dependent reduction of glutamyl-tRNA(Glu) to glutamate 1-semialdehyde (GSA). In Methylibium petroleiphilum (strain ATCC BAA-1232 / LMG 22953 / PM1), this protein is Glutamyl-tRNA reductase.